Consider the following 160-residue polypeptide: SsrA-binding protein (160 aa).

Belongs to the SmpB family.

The protein resides in the cytoplasm. In terms of biological role, required for rescue of stalled ribosomes mediated by trans-translation. Binds to transfer-messenger RNA (tmRNA), required for stable association of tmRNA with ribosomes. tmRNA and SmpB together mimic tRNA shape, replacing the anticodon stem-loop with SmpB. tmRNA is encoded by the ssrA gene; the 2 termini fold to resemble tRNA(Ala) and it encodes a 'tag peptide', a short internal open reading frame. During trans-translation Ala-aminoacylated tmRNA acts like a tRNA, entering the A-site of stalled ribosomes, displacing the stalled mRNA. The ribosome then switches to translate the ORF on the tmRNA; the nascent peptide is terminated with the 'tag peptide' encoded by the tmRNA and targeted for degradation. The ribosome is freed to recommence translation, which seems to be the essential function of trans-translation. The polypeptide is SsrA-binding protein (Mannheimia succiniciproducens (strain KCTC 0769BP / MBEL55E)).